A 282-amino-acid chain; its full sequence is Elongation factor Ts (282 aa).

The interval 80-83 is involved in Mg(2+) ion dislocation from EF-Tu; it reads TDFV.

It belongs to the EF-Ts family.

Its subcellular location is the cytoplasm. Functionally, associates with the EF-Tu.GDP complex and induces the exchange of GDP to GTP. It remains bound to the aminoacyl-tRNA.EF-Tu.GTP complex up to the GTP hydrolysis stage on the ribosome. In Chlamydia trachomatis serovar L2b (strain UCH-1/proctitis), this protein is Elongation factor Ts.